The primary structure comprises 264 residues: Thymidylate synthase (264 aa).

A dUMP-binding site is contributed by Arg21. A (6R)-5,10-methylene-5,6,7,8-tetrahydrofolate-binding site is contributed by His51. 126–127 is a binding site for dUMP; the sequence is RR. Cys146 serves as the catalytic Nucleophile. Residues 166-169, Asn177, and 207-209 contribute to the dUMP site; these read RSCD and HLY. Position 169 (Asp169) interacts with (6R)-5,10-methylene-5,6,7,8-tetrahydrofolate. Ala263 contributes to the (6R)-5,10-methylene-5,6,7,8-tetrahydrofolate binding site.

This sequence belongs to the thymidylate synthase family. Bacterial-type ThyA subfamily. Homodimer.

Its subcellular location is the cytoplasm. It catalyses the reaction dUMP + (6R)-5,10-methylene-5,6,7,8-tetrahydrofolate = 7,8-dihydrofolate + dTMP. It participates in pyrimidine metabolism; dTTP biosynthesis. Functionally, catalyzes the reductive methylation of 2'-deoxyuridine-5'-monophosphate (dUMP) to 2'-deoxythymidine-5'-monophosphate (dTMP) while utilizing 5,10-methylenetetrahydrofolate (mTHF) as the methyl donor and reductant in the reaction, yielding dihydrofolate (DHF) as a by-product. This enzymatic reaction provides an intracellular de novo source of dTMP, an essential precursor for DNA biosynthesis. The sequence is that of Thymidylate synthase from Escherichia coli (strain 55989 / EAEC).